We begin with the raw amino-acid sequence, 84 residues long: Large ribosomal subunit protein uL23 (84 aa).

The protein belongs to the universal ribosomal protein uL23 family. In terms of assembly, part of the 50S ribosomal subunit. Contacts protein L29.

Its function is as follows. Binds to 23S rRNA. One of the proteins that surrounds the polypeptide exit tunnel on the outside of the ribosome. The polypeptide is Large ribosomal subunit protein uL23 (Thermoplasma acidophilum (strain ATCC 25905 / DSM 1728 / JCM 9062 / NBRC 15155 / AMRC-C165)).